Here is a 274-residue protein sequence, read N- to C-terminus: Probable starch degradation products transport system permease protein AmyC (274 aa).

Transmembrane regions (helical) follow at residues 11–31 (LTFLGIVLSLLWISPFYIILV), 73–93 (LIITVFSILIIAIFSSMTAYA), 103–123 (VIIYMIFTVAMLIPFQSVMIP), 139–159 (LVFMYLGFGSSLGVFLYYGAL), 184–204 (IILPLLNPTTITLAVLDIMWI), and 238–258 (WNLGMAGLTIAILPVVIFYFL). Positions 69 to 259 (FSNTLIITVF…LPVVIFYFLA (191 aa)) constitute an ABC transmembrane type-1 domain.

Belongs to the binding-protein-dependent transport system permease family. MalFG subfamily.

It localises to the cell membrane. In terms of biological role, probably part of a binding-protein-dependent transport system starch degradation products. Probably responsible for the translocation of the substrate across the membrane. This Thermoanaerobacterium thermosulfurigenes (Clostridium thermosulfurogenes) protein is Probable starch degradation products transport system permease protein AmyC (amyC).